The primary structure comprises 750 residues: Photosystem I P700 chlorophyll a apoprotein A1 (750 aa).

8 helical membrane passes run 70–93 (VFSAHFGQLSIIFLWLSGMYFHGA), 156–179 (LYCTAIGALVFASLMLFAGWFHYH), 195–219 (LNHHLAGLLGLGSLSWAGHQIHVSL), 291–309 (IAHHHLAIAILFLIAGHMY), 346–369 (WHAQLSLNLAMLGSLTIVVAHHMY), 385–411 (LSLFTHHMWIGGFLIVGAAAHAAIFMV), 433–455 (AIISHLNWACIFLGFHSFGLYIH), and 531–549 (FLVHHIHAFTIHVTVLILL). [4Fe-4S] cluster-binding residues include cysteine 573 and cysteine 582. The next 2 membrane-spanning stretches (helical) occupy residues 589–610 (HVFLGLFWMYNAISVVIFHFSW) and 664–686 (LSAYGLFFLGAHFVWAFSLMFLF). Position 675 (histidine 675) interacts with chlorophyll a'. The chlorophyll a site is built by methionine 683 and tyrosine 691. Tryptophan 692 lines the phylloquinone pocket. A helical membrane pass occupies residues 724 to 744 (AVGVTHYLLGGIATTWAFFLA).

This sequence belongs to the PsaA/PsaB family. The PsaA/B heterodimer binds the P700 chlorophyll special pair and subsequent electron acceptors. PSI consists of a core antenna complex that captures photons, and an electron transfer chain that converts photonic excitation into a charge separation. The eukaryotic PSI reaction center is composed of at least 11 subunits. P700 is a chlorophyll a/chlorophyll a' dimer, A0 is one or more chlorophyll a, A1 is one or both phylloquinones and FX is a shared 4Fe-4S iron-sulfur center. is required as a cofactor.

Its subcellular location is the plastid. It localises to the chloroplast thylakoid membrane. It catalyses the reaction reduced [plastocyanin] + hnu + oxidized [2Fe-2S]-[ferredoxin] = oxidized [plastocyanin] + reduced [2Fe-2S]-[ferredoxin]. Functionally, psaA and PsaB bind P700, the primary electron donor of photosystem I (PSI), as well as the electron acceptors A0, A1 and FX. PSI is a plastocyanin-ferredoxin oxidoreductase, converting photonic excitation into a charge separation, which transfers an electron from the donor P700 chlorophyll pair to the spectroscopically characterized acceptors A0, A1, FX, FA and FB in turn. Oxidized P700 is reduced on the lumenal side of the thylakoid membrane by plastocyanin. In Phalaenopsis aphrodite subsp. formosana (Moth orchid), this protein is Photosystem I P700 chlorophyll a apoprotein A1.